The sequence spans 321 residues: Nucleotide-binding protein GOX0815 (321 aa).

27-34 serves as a coordination point for ATP; sequence GLSGAGKS. Residue 72 to 75 coordinates GTP; it reads DVRS.

It belongs to the RapZ-like family.

Displays ATPase and GTPase activities. This is Nucleotide-binding protein GOX0815 from Gluconobacter oxydans (strain 621H) (Gluconobacter suboxydans).